A 717-amino-acid chain; its full sequence is ATP-dependent zinc metalloprotease FtsH (717 aa).

Residues 1 to 9 are Cytoplasmic-facing; that stretch reads MKNASRIFK. Residues 10 to 30 traverse the membrane as a helical segment; sequence GPLIWILLCIGLIIVFLQFAG. Over 31-111 the chain is Extracellular; it reads SGNGYKDIPT…SWQGENPGQS (81 aa). Residues 112 to 132 form a helical membrane-spanning segment; sequence IWKALLINFLPFVIILLFFLW. Residues 133-717 are Cytoplasmic-facing; it reads AMNAAQGMGG…NGNPWGPPRS (585 aa). An ATP-binding site is contributed by 207–214; sequence GPPGTGKT. Residue His-429 participates in Zn(2+) binding. The active site involves Glu-430. Residues His-433 and Asp-505 each coordinate Zn(2+). The segment at 617–717 is disordered; that stretch reads AFTGSDKRVP…NGNPWGPPRS (101 aa). Residues 691-717 are compositionally biased toward pro residues; that stretch reads PEPPSPTHPGEGPQPPSNGNPWGPPRS.

In the central section; belongs to the AAA ATPase family. The protein in the C-terminal section; belongs to the peptidase M41 family. Homohexamer. Requires Zn(2+) as cofactor.

The protein resides in the cell membrane. In terms of biological role, acts as a processive, ATP-dependent zinc metallopeptidase for both cytoplasmic and membrane proteins. Plays a role in the quality control of integral membrane proteins. This chain is ATP-dependent zinc metalloprotease FtsH, found in Cutibacterium acnes (strain SK137) (Propionibacterium acnes).